Here is a 346-residue protein sequence, read N- to C-terminus: NADH-ubiquinone oxidoreductase chain 2 (346 aa).

Helical transmembrane passes span 25–45 (HWIL…PLIS), 52–72 (AIEA…LILF), 95–115 (CLML…HFWF), 124–144 (LITA…LLLL), 149–169 (LNTT…GWMG), 178–198 (ILAF…SYNP), 200–220 (LTIL…LSLA), 242–262 (ATVM…GFMP), 274–294 (EMTP…FFYL), and 326–346 (AILT…ITML).

This sequence belongs to the complex I subunit 2 family. In terms of assembly, core subunit of respiratory chain NADH dehydrogenase (Complex I) which is composed of 45 different subunits.

It localises to the mitochondrion inner membrane. It carries out the reaction a ubiquinone + NADH + 5 H(+)(in) = a ubiquinol + NAD(+) + 4 H(+)(out). Its function is as follows. Core subunit of the mitochondrial membrane respiratory chain NADH dehydrogenase (Complex I) which catalyzes electron transfer from NADH through the respiratory chain, using ubiquinone as an electron acceptor. Essential for the catalytic activity and assembly of complex I. The chain is NADH-ubiquinone oxidoreductase chain 2 (MT-ND2) from Gallus gallus (Chicken).